A 304-amino-acid polypeptide reads, in one-letter code: N-acetylmuramic acid 6-phosphate etherase (304 aa).

Positions 62-225 (IVTAFRQGGR…TTASMILMGK (164 aa)) constitute an SIS domain. The active-site Proton donor is Glu90. Glu121 is a catalytic residue.

It belongs to the GCKR-like family. MurNAc-6-P etherase subfamily. Homodimer.

The catalysed reaction is N-acetyl-D-muramate 6-phosphate + H2O = N-acetyl-D-glucosamine 6-phosphate + (R)-lactate. It participates in amino-sugar metabolism; 1,6-anhydro-N-acetylmuramate degradation. It functions in the pathway amino-sugar metabolism; N-acetylmuramate degradation. The protein operates within cell wall biogenesis; peptidoglycan recycling. Functionally, specifically catalyzes the cleavage of the D-lactyl ether substituent of MurNAc 6-phosphate, producing GlcNAc 6-phosphate and D-lactate. Together with AnmK, is also required for the utilization of anhydro-N-acetylmuramic acid (anhMurNAc) either imported from the medium or derived from its own cell wall murein, and thus plays a role in cell wall recycling. This chain is N-acetylmuramic acid 6-phosphate etherase, found in Actinobacillus succinogenes (strain ATCC 55618 / DSM 22257 / CCUG 43843 / 130Z).